A 917-amino-acid polypeptide reads, in one-letter code: Probable dipeptidyl-aminopeptidase B (917 aa).

Positions 1–75 (MTVGRRLNDE…KYRDDVEEDW (75 aa)) are disordered. Over 1 to 93 (MTVGRRLNDE…NAKPSQRRTQ (93 aa)) the chain is Cytoplasmic. Over residues 27-39 (DSSSTASVSLTLV) the composition is skewed to low complexity. Over residues 40 to 49 (DGTNHTTAKP) the composition is skewed to polar residues. A compositionally biased stretch (basic and acidic residues) spans 57–69 (VSRDRYADEKYRD). A helical; Signal-anchor for type II membrane protein transmembrane segment spans residues 94-114 (IVFWLLVALCVGGWAVAFLFF). Topologically, residues 115–917 (VTSPGNTIST…KRVIRRLLHR (803 aa)) are vacuolar. Over residues 124–133 (TTPDTGSGSP) the composition is skewed to polar residues. A disordered region spans residues 124 to 150 (TTPDTGSGSPDSDVIKPGSPPAGKKIP). Asn-206, Asn-302, and Asn-354 each carry an N-linked (GlcNAc...) asparagine glycan. Ser-759 (charge relay system) is an active-site residue. The N-linked (GlcNAc...) asparagine glycan is linked to Asn-818. Catalysis depends on charge relay system residues Asp-836 and His-869.

It belongs to the peptidase S9B family.

Its subcellular location is the vacuole membrane. The catalysed reaction is Release of an N-terminal dipeptide, Xaa-Yaa-|-Zaa-, from a polypeptide, preferentially when Yaa is Pro, provided Zaa is neither Pro nor hydroxyproline.. Functionally, type IV dipeptidyl-peptidase which removes N-terminal dipeptides sequentially from polypeptides having unsubstituted N-termini provided that the penultimate residue is proline. The protein is Probable dipeptidyl-aminopeptidase B (DAPB) of Arthroderma gypseum (strain ATCC MYA-4604 / CBS 118893) (Microsporum gypseum).